The following is a 421-amino-acid chain: 3-isopropylmalate dehydratase large subunit (421 aa).

Cysteine 300, cysteine 360, and cysteine 363 together coordinate [4Fe-4S] cluster.

This sequence belongs to the aconitase/IPM isomerase family. LeuC type 2 subfamily. As to quaternary structure, heterodimer of LeuC and LeuD. The cofactor is [4Fe-4S] cluster.

The catalysed reaction is (2R,3S)-3-isopropylmalate = (2S)-2-isopropylmalate. Its pathway is amino-acid biosynthesis; L-leucine biosynthesis; L-leucine from 3-methyl-2-oxobutanoate: step 2/4. Functionally, catalyzes the isomerization between 2-isopropylmalate and 3-isopropylmalate, via the formation of 2-isopropylmaleate. The polypeptide is 3-isopropylmalate dehydratase large subunit (Thermodesulfovibrio yellowstonii (strain ATCC 51303 / DSM 11347 / YP87)).